Here is a 142-residue protein sequence, read N- to C-terminus: Large ribosomal subunit protein uL11 (142 aa).

This sequence belongs to the universal ribosomal protein uL11 family. Part of the ribosomal stalk of the 50S ribosomal subunit. Interacts with L10 and the large rRNA to form the base of the stalk. L10 forms an elongated spine to which L12 dimers bind in a sequential fashion forming a multimeric L10(L12)X complex. Post-translationally, one or more lysine residues are methylated.

Its function is as follows. Forms part of the ribosomal stalk which helps the ribosome interact with GTP-bound translation factors. In Nitrobacter winogradskyi (strain ATCC 25391 / DSM 10237 / CIP 104748 / NCIMB 11846 / Nb-255), this protein is Large ribosomal subunit protein uL11.